The chain runs to 404 residues: Tyrosine--tRNA ligase (404 aa).

The 'HIGH' region signature appears at 45-54; that stretch reads PTAPDLHLGH. Residues 229–233 carry the 'KMSKS' region motif; sequence KMSKS. Residue Lys-232 participates in ATP binding. Residues 342-402 enclose the S4 RNA-binding domain; it reads IFIASIVRLA…GKKAIAQVTF (61 aa).

It belongs to the class-I aminoacyl-tRNA synthetase family. TyrS type 2 subfamily. As to quaternary structure, homodimer.

It is found in the cytoplasm. The enzyme catalyses tRNA(Tyr) + L-tyrosine + ATP = L-tyrosyl-tRNA(Tyr) + AMP + diphosphate + H(+). Catalyzes the attachment of tyrosine to tRNA(Tyr) in a two-step reaction: tyrosine is first activated by ATP to form Tyr-AMP and then transferred to the acceptor end of tRNA(Tyr). In Acinetobacter baylyi (strain ATCC 33305 / BD413 / ADP1), this protein is Tyrosine--tRNA ligase.